The sequence spans 414 residues: Nuclear localization sequence-binding protein (414 aa).

3 disordered regions span residues 1 to 172, 244 to 264, and 336 to 414; these read MAKT…TIFV, STSKPAGNNDRAKKFGDTPSE, and RPVR…KTFD. Residues 10-26 show a composition bias toward basic and acidic residues; the sequence is NKKEVKASKQAKEEKAK. Composition is skewed to low complexity over residues 27-44 and 54-73; these read AVSSSSSESSSSSSSSSE and ESSSSSSSSDSESSSSSSSD. Residues 78–87 are compositionally biased toward basic and acidic residues; it reads AETKKEESKD. 9 positions are modified to phosphoserine: serine 93, serine 95, serine 96, serine 97, serine 116, serine 127, serine 129, serine 131, and serine 143. Residues 96–105 show a composition bias toward acidic residues; sequence SSDEEEEEEK. Residues 106 to 117 are compositionally biased toward basic and acidic residues; the sequence is EETKKEESKESS. The span at 118 to 128 shows a compositional bias: low complexity; the sequence is SSDSSSSSSSD. Residues 134–144 show a composition bias toward basic and acidic residues; it reads EESNDKKRKSE. RRM domains lie at 168-246 and 267-345; these read ATIF…MSTS and DTLF…FSSP. The span at 351 to 386 shows a compositional bias: gly residues; that stretch reads GGRGGSRGFGGRGGGRGGNRGFGGRGGARGGRGGFR. At arginine 353 the chain carries Omega-N-methylarginine. The tract at residues 353 to 384 is RGG-box; the sequence is RGGSRGFGGRGGGRGGNRGFGGRGGARGGRGG. Asymmetric dimethylarginine; by HMT1; alternate is present on residues arginine 357, arginine 362, and arginine 366. An omega-N-methylarginine; by HMT1; alternate mark is found at arginine 357, arginine 362, and arginine 366. Residues 366-384 form an RNA-binding RGG-box region; sequence RGGNRGFGGRGGARGGRGG. Arginine 370 carries the post-translational modification Omega-N-methylarginine. Asymmetric dimethylarginine; by HMT1; alternate is present on residues arginine 375, arginine 379, and arginine 382. Residues arginine 375, arginine 379, and arginine 382 each carry the omega-N-methylarginine; by HMT1; alternate modification. Arginine 386 carries the omega-N-methylarginine modification.

This sequence belongs to the RRM GAR family. Post-translationally, methylated by HMT1, forming asymmetric dimethylarginines (DMA) within a domain referred to as an RGG box, made up of repeated Gly-Gly dipeptides interspersed with Arg and aromatic residues. In terms of processing, pyrophosphorylated by 5-diphosphoinositol pentakisphosphate (5-IP7). Serine pyrophosphorylation is achieved by Mg(2+)-dependent, but enzyme independent transfer of a beta-phosphate from a inositol pyrophosphate to a pre-phosphorylated serine residue.

Its subcellular location is the nucleus. The protein localises to the nucleolus. Involved in pre-rRNA processing. Specifically binds nuclear localization sequences. Candidate for a receptor at the nucleus that may be involved in both RNA and protein transport. Binds telomeric sequences of the type (TG[1-3])n in vitro. The sequence is that of Nuclear localization sequence-binding protein from Saccharomyces cerevisiae (strain ATCC 204508 / S288c) (Baker's yeast).